Consider the following 652-residue polypeptide: tRNA 5-methylaminomethyl-2-thiouridine biosynthesis bifunctional protein MnmC (652 aa).

The tract at residues 1-227 (MLSWKNDLTP…KREMLTGKYS (227 aa)) is tRNA (mnm(5)s(2)U34)-methyltransferase. Residues 259-652 (IGAGIAGSTL…ARFLYRRIRK (394 aa)) form an FAD-dependent cmnm(5)s(2)U34 oxidoreductase region.

In the N-terminal section; belongs to the methyltransferase superfamily. tRNA (mnm(5)s(2)U34)-methyltransferase family. The protein in the C-terminal section; belongs to the DAO family. Requires FAD as cofactor.

It localises to the cytoplasm. It catalyses the reaction 5-aminomethyl-2-thiouridine(34) in tRNA + S-adenosyl-L-methionine = 5-methylaminomethyl-2-thiouridine(34) in tRNA + S-adenosyl-L-homocysteine + H(+). In terms of biological role, catalyzes the last two steps in the biosynthesis of 5-methylaminomethyl-2-thiouridine (mnm(5)s(2)U) at the wobble position (U34) in tRNA. Catalyzes the FAD-dependent demodification of cmnm(5)s(2)U34 to nm(5)s(2)U34, followed by the transfer of a methyl group from S-adenosyl-L-methionine to nm(5)s(2)U34, to form mnm(5)s(2)U34. This Leptospira borgpetersenii serovar Hardjo-bovis (strain JB197) protein is tRNA 5-methylaminomethyl-2-thiouridine biosynthesis bifunctional protein MnmC.